A 104-amino-acid chain; its full sequence is Replication restart protein PriB (104 aa).

The region spanning 1 to 101 (MTNRLVLSGT…LHAEQIDLID (101 aa)) is the SSB domain.

Belongs to the PriB family. As to quaternary structure, homodimer. Interacts with PriA and DnaT. Component of the replication restart primosome. Primosome assembly occurs via a 'hand-off' mechanism. PriA binds to replication forks, subsequently PriB then DnaT bind; DnaT then displaces ssDNA to generate the helicase loading substrate.

Involved in the restart of stalled replication forks, which reloads the replicative helicase on sites other than the origin of replication; the PriA-PriB pathway is the major replication restart pathway. During primosome assembly it facilitates complex formation between PriA and DnaT on DNA; stabilizes PriA on DNA. Stimulates the DNA unwinding activity of PriA helicase. This chain is Replication restart protein PriB, found in Enterobacter sp. (strain 638).